Reading from the N-terminus, the 282-residue chain is Probable endonuclease 4 (282 aa).

Zn(2+) contacts are provided by His-69, His-109, Glu-145, Asp-179, His-182, His-216, Asp-229, His-231, and Glu-261.

This sequence belongs to the AP endonuclease 2 family. Requires Zn(2+) as cofactor.

It carries out the reaction Endonucleolytic cleavage to 5'-phosphooligonucleotide end-products.. Endonuclease IV plays a role in DNA repair. It cleaves phosphodiester bonds at apurinic or apyrimidinic (AP) sites, generating a 3'-hydroxyl group and a 5'-terminal sugar phosphate. This Campylobacter hominis (strain ATCC BAA-381 / DSM 21671 / CCUG 45161 / LMG 19568 / NCTC 13146 / CH001A) protein is Probable endonuclease 4.